The primary structure comprises 286 residues: CBY1-interacting BAR domain-containing protein 1 (286 aa).

A mitochondrion-targeting transit peptide spans 1–47 (MLRRNLDERDAQTKQLQDAVTNVEKHFGELCQIFAAYVRKTARLRDK). The interval 10-220 (DAQTKQLQDA…NIDEDEDLEV (211 aa)) is BAR-like. A coiled-coil region spans residues 107–178 (KMKRDDLKAT…IDNFEKQKIK (72 aa)). The tract at residues 258-286 (GQISTCRTRKDQQVEDEDDEELDVTEDEN) is disordered. Over residues 271–286 (VEDEDDEELDVTEDEN) the composition is skewed to acidic residues.

It belongs to the CIBAR family. As to quaternary structure, homodimer (via BAR-like domain). Heterodimer with FAM92B (via BAR-like domains). Interacts (via BAR-like domain) with CBY1; this interaction is required for targeting FAM92A to centriole and cilium basal body. Interacts (via BAR-like domain) with CBY3; both proteins form a ninefold symmetric structure at the flagellar base; are recruited to the annulus in a mutually dependent manner and regulate annulus positionning. In terms of tissue distribution, expressed in the heart, liver, spleen, lung, kidney, brain and muscle (at protein level). Strongly expressed throughout the developing limb bud, including the progress zone and the apical ectodermal ridge.

The protein resides in the cytoplasm. Its subcellular location is the cytoskeleton. The protein localises to the microtubule organizing center. It localises to the centrosome. It is found in the centriole. The protein resides in the cilium basal body. Its subcellular location is the cell projection. The protein localises to the cilium. It localises to the nucleus. It is found in the mitochondrion inner membrane. The protein resides in the flagellum. Plays a critical role in regulating mitochondrial ultrastructure and function by maintaining the integrity of mitochondrial morphology, particularly the organization of cristae. Preferentially binds to negatively charged phospholipids like cardiolipin and phosphatidylinositol 4,5-bisphosphate enhancing its interaction with mitochondrial membranes. Induces membrane curvature and tubulation, which are critical for maintaining mitochondrial ultrastructure and the organization of cristae. Plays a crucial role in ciliogenesis. May play a role in limb development through its role in ciliogenesis. Plays a key role in the correct positioning of the annulus, a septin-based ring structure in the sperm flagellum, serving both as a physical barrier and a membrane diffusion barrier that separates the midpiece (MP) from the principal piece (PP). This positioning is essential for proper sperm motility and function. Interacts with CBY3 to form a complex which localizes to the curved membrane region of the flagellar pocket. By doing so, may provide stability and rigidity to the periannular membrane to prevent membrane deformation. This function is crucial for halting annulus migration at the proximal end of the fibrous sheath-containing PP. This chain is CBY1-interacting BAR domain-containing protein 1, found in Mus musculus (Mouse).